The sequence spans 107 residues: Growth-regulated alpha protein (107 aa).

A signal peptide spans 1-34; it reads MARAALSAAPSNPRLLRVALLLLLLVAAGRRAAG. 2 cysteine pairs are disulfide-bonded: C43–C69 and C45–C85.

It belongs to the intercrine alpha (chemokine CxC) family. Post-translationally, N-terminal processed forms GRO-alpha(4-73), GRO-alpha(5-73) and GRO-alpha(6-73) are produced by proteolytic cleavage after secretion from peripheral blood monocytes.

Its subcellular location is the secreted. Has chemotactic activity for neutrophils. May play a role in inflammation and exerts its effects on endothelial cells in an autocrine fashion. In vitro, the processed forms GRO-alpha(4-73), GRO-alpha(5-73) and GRO-alpha(6-73) show a 30-fold higher chemotactic activity. The protein is Growth-regulated alpha protein (CXCL1) of Homo sapiens (Human).